We begin with the raw amino-acid sequence, 224 residues long: Large ribosomal subunit protein bL25 (224 aa).

The interval 196–224 (VEEVDTDAEEVDAADVPATEQGSEEDKGE) is disordered. Residues 197–208 (EEVDTDAEEVDA) are compositionally biased toward acidic residues.

The protein belongs to the bacterial ribosomal protein bL25 family. CTC subfamily. Part of the 50S ribosomal subunit; part of the 5S rRNA/L5/L18/L25 subcomplex. Contacts the 5S rRNA. Binds to the 5S rRNA independently of L5 and L18.

Functionally, this is one of the proteins that binds to the 5S RNA in the ribosome where it forms part of the central protuberance. This chain is Large ribosomal subunit protein bL25, found in Psychrobacter sp. (strain PRwf-1).